The following is a 218-amino-acid chain: Octanoyltransferase (218 aa).

One can recognise a BPL/LPL catalytic domain in the interval 31–206 (REAGDEVWLV…QLVKHLDYAE (176 aa)). Substrate contacts are provided by residues 70 to 77 (RGGQVTYH), 137 to 139 (SLG), and 150 to 152 (GLA). The active-site Acyl-thioester intermediate is the Cys168.

Belongs to the LipB family.

Its subcellular location is the cytoplasm. It carries out the reaction octanoyl-[ACP] + L-lysyl-[protein] = N(6)-octanoyl-L-lysyl-[protein] + holo-[ACP] + H(+). It participates in protein modification; protein lipoylation via endogenous pathway; protein N(6)-(lipoyl)lysine from octanoyl-[acyl-carrier-protein]: step 1/2. Its function is as follows. Catalyzes the transfer of endogenously produced octanoic acid from octanoyl-acyl-carrier-protein onto the lipoyl domains of lipoate-dependent enzymes. Lipoyl-ACP can also act as a substrate although octanoyl-ACP is likely to be the physiological substrate. The polypeptide is Octanoyltransferase (Pseudomonas syringae pv. tomato (strain ATCC BAA-871 / DC3000)).